A 154-amino-acid chain; its full sequence is Peptide methionine sulfoxide reductase MsrB (154 aa).

The MsrB domain maps to 28–150 (DQQWREQLSE…NSVSLIFNKI (123 aa)). The Zn(2+) site is built by Cys67, Cys70, Cys116, and Cys119. Residue Cys139 is the Nucleophile of the active site.

Belongs to the MsrB Met sulfoxide reductase family. The cofactor is Zn(2+).

The enzyme catalyses L-methionyl-[protein] + [thioredoxin]-disulfide + H2O = L-methionyl-(R)-S-oxide-[protein] + [thioredoxin]-dithiol. The chain is Peptide methionine sulfoxide reductase MsrB from Vibrio vulnificus (strain CMCP6).